The sequence spans 516 residues: 2-isopropylmalate synthase (516 aa).

The region spanning 5-268 (LIIFDTTLRD…DLGIDTTQIV (264 aa)) is the Pyruvate carboxyltransferase domain. Mn(2+)-binding residues include aspartate 14, histidine 202, histidine 204, and asparagine 239. Positions 395 to 516 (KFVSLSQHSE…DKLNPQRADI (122 aa)) are regulatory domain.

This sequence belongs to the alpha-IPM synthase/homocitrate synthase family. LeuA type 1 subfamily. In terms of assembly, homodimer. Mn(2+) is required as a cofactor.

It is found in the cytoplasm. The catalysed reaction is 3-methyl-2-oxobutanoate + acetyl-CoA + H2O = (2S)-2-isopropylmalate + CoA + H(+). It participates in amino-acid biosynthesis; L-leucine biosynthesis; L-leucine from 3-methyl-2-oxobutanoate: step 1/4. Functionally, catalyzes the condensation of the acetyl group of acetyl-CoA with 3-methyl-2-oxobutanoate (2-ketoisovalerate) to form 3-carboxy-3-hydroxy-4-methylpentanoate (2-isopropylmalate). This Paraburkholderia phymatum (strain DSM 17167 / CIP 108236 / LMG 21445 / STM815) (Burkholderia phymatum) protein is 2-isopropylmalate synthase.